The primary structure comprises 95 residues: Co-chaperonin GroES (95 aa).

It belongs to the GroES chaperonin family. Heptamer of 7 subunits arranged in a ring. Interacts with the chaperonin GroEL.

Its subcellular location is the cytoplasm. Functionally, together with the chaperonin GroEL, plays an essential role in assisting protein folding. The GroEL-GroES system forms a nano-cage that allows encapsulation of the non-native substrate proteins and provides a physical environment optimized to promote and accelerate protein folding. GroES binds to the apical surface of the GroEL ring, thereby capping the opening of the GroEL channel. The sequence is that of Co-chaperonin GroES from Rickettsia typhi (strain ATCC VR-144 / Wilmington).